We begin with the raw amino-acid sequence, 560 residues long: Membrane-bound O-acyltransferase GUP1 (560 aa).

The Extracellular segment spans residues 1-43; the sequence is MSLISILSPLITSEGLDSRIKPSPKKDASTTTKPSLWKTTEFK. The chain crosses the membrane as a helical span at residues 44–64; it reads FYYIAFLVVVPLMFYAGLQAS. Topologically, residues 65-101 are cytoplasmic; the sequence is SPENPNYARYERLLSQGWLFGRKVDNSDSQYRFFRDN. Residues 102-122 form a helical membrane-spanning segment; it reads FALLSVLMLVHTSIKRIVLYS. The Extracellular segment spans residues 123-131; the sequence is TNITKLRFD. The helical transmembrane segment at 132 to 152 threads the bilayer; that stretch reads LIFGLIFLVAAHGVNSIRILA. Topologically, residues 153–165 are cytoplasmic; that stretch reads HMLILYAIAHVLK. Residues 166 to 185 traverse the membrane as a helical segment; it reads NFRRIATISIWIYGISTLFI. Residues 186–276 lie on the Extracellular side of the membrane; that stretch reads NDNFRAYPFG…AAHPIQDYSL (91 aa). The helical transmembrane segment at 277–297 threads the bilayer; sequence MNYIAYVTYTPLFIAGPIITF. Residues 298-322 are Cytoplasmic-facing; sequence NDYVYQSKHTLPSINFKFIFYYAVR. The helical transmembrane segment at 323 to 343 threads the bilayer; sequence FVIALLSMEFILHFLHVVAIS. The Extracellular portion of the chain corresponds to 344 to 352; the sequence is KTKAWENDT. Residues 353–373 form a helical membrane-spanning segment; that stretch reads PFQISMIGLFNLNIIWLKLLI. Topologically, residues 374–432 are cytoplasmic; sequence PWRLFRLWALLDGIDTPENMIRCVDNNYSSLAFWRAWHRSYNKWVVRYIYIPLGGSKNR. Helical transmembrane passes span 433–453 and 454–474; these read VLTS…ELKL and LLWG…TQIF. The active site involves H447. The Cytoplasmic segment spans residues 475–485; the sequence is SHYTDAVWYRH. A helical transmembrane segment spans residues 486–506; it reads VCAVGAVFNIWVMMIANLFGF. The Extracellular portion of the chain corresponds to 507-526; it reads CLGSDGTKKLLSDMFCTVSG. The chain crosses the membrane as a helical span at residues 527–547; sequence FKFVILASVSLFIAVQIMFEI. At 548 to 560 the chain is on the cytoplasmic side; sequence REEEKRHGIYLKC.

The protein belongs to the membrane-bound acyltransferase family. As to quaternary structure, interacts with mitochondrial outer membrane voltage-dependent anion channel (VDAC) POR1.

The protein resides in the cell membrane. The protein localises to the endoplasmic reticulum membrane. It localises to the mitochondrion membrane. Membrane-bound O-acyltransferase involved in the remodeling of glycosylphosphatidylinositol (GPI) anchors. Acts only on GPI-anchored proteins, but not on free GPI lipids. Acts as an acyltransferase for GPI anchors that adds C26 fatty acids to the sn2 position of lyso-PI-containing GPI anchors. PER1 first deacylates, GUP1 subsequently reacylates the anchor lipid, thus replacing a shorter fatty acid (C16:0 or C18:0) by C26:0. Also involved in lipid metabolism, having profound effects on sphingolipid-sterol-ordered domains integrity and assembly. Together with GUP2, has an influence on the chemical composition of the yeast extracellular matrix (yECM) in yeast multicellular aggregates, such as biofilms and colonies. Involved in cell integrity and apoptosis. The chain is Membrane-bound O-acyltransferase GUP1 (GUP1) from Saccharomyces cerevisiae (strain ATCC 204508 / S288c) (Baker's yeast).